Here is an 886-residue protein sequence, read N- to C-terminus: Alanine--tRNA ligase (886 aa).

Zn(2+)-binding residues include His-570, His-574, Cys-672, and His-676.

It belongs to the class-II aminoacyl-tRNA synthetase family. Requires Zn(2+) as cofactor.

It localises to the cytoplasm. The enzyme catalyses tRNA(Ala) + L-alanine + ATP = L-alanyl-tRNA(Ala) + AMP + diphosphate. Catalyzes the attachment of alanine to tRNA(Ala) in a two-step reaction: alanine is first activated by ATP to form Ala-AMP and then transferred to the acceptor end of tRNA(Ala). Also edits incorrectly charged Ser-tRNA(Ala) and Gly-tRNA(Ala) via its editing domain. The sequence is that of Alanine--tRNA ligase from Acidothermus cellulolyticus (strain ATCC 43068 / DSM 8971 / 11B).